A 1024-amino-acid polypeptide reads, in one-letter code: Beta-galactosidase (1024 aa).

Residues asparagine 103 and aspartate 202 each coordinate substrate. Position 202 (aspartate 202) interacts with Na(+). The Mg(2+) site is built by glutamate 417, histidine 419, and glutamate 462. Residues glutamate 462 and 538-541 (EYAH) contribute to the substrate site. Glutamate 462 functions as the Proton donor in the catalytic mechanism. The active-site Nucleophile is the glutamate 538. Position 598 (asparagine 598) interacts with Mg(2+). 2 residues coordinate Na(+): phenylalanine 602 and asparagine 605. Residues asparagine 605 and tryptophan 1000 each contribute to the substrate site.

It belongs to the glycosyl hydrolase 2 family. As to quaternary structure, homotetramer. Mg(2+) serves as cofactor. Requires Na(+) as cofactor.

It carries out the reaction Hydrolysis of terminal non-reducing beta-D-galactose residues in beta-D-galactosides.. In Escherichia coli O1:K1 / APEC, this protein is Beta-galactosidase.